The sequence spans 86 residues: Small ribosomal subunit protein bS20 (86 aa).

The protein belongs to the bacterial ribosomal protein bS20 family.

In terms of biological role, binds directly to 16S ribosomal RNA. This is Small ribosomal subunit protein bS20 from Exiguobacterium sibiricum (strain DSM 17290 / CCUG 55495 / CIP 109462 / JCM 13490 / 255-15).